The chain runs to 472 residues: ATP-dependent rRNA helicase rrp3 (472 aa).

A disordered region spans residues 1-52 (MPAIKKRKIAREAPQQEDHSDSEAHSSASEDAAPNTTEQEQEPSEAPKQAPK). Over residues 10-24 (AREAPQQEDHSDSEA) the composition is skewed to basic and acidic residues. The short motif at 52-80 (KSFKELGLIEQLCEACDSMGYKAPTAIQA) is the Q motif element. Positions 83–254 (IPLALQGRDL…RASLQNPLRV (172 aa)) constitute a Helicase ATP-binding domain. Residue 96–103 (AETGSGKT) participates in ATP binding. The DEAD box signature appears at 202-205 (DEAD). Residues 282–426 (YLVYLLNEFV…EYPAEKDEVM (145 aa)) form the Helicase C-terminal domain. The segment at 443–472 (MKNYDEKKGSRGKKFAKGKRSREDMDQEEG) is disordered. Basic residues predominate over residues 452–462 (SRGKKFAKGKR).

This sequence belongs to the DEAD box helicase family. DDX47/RRP3 subfamily. Interacts with the SSU processome.

The protein resides in the nucleus. It carries out the reaction ATP + H2O = ADP + phosphate + H(+). Functionally, ATP-dependent rRNA helicase required for pre-ribosomal RNA processing. Involved in the maturation of the 35S-pre-rRNA and to its cleavage to mature 18S rRNA. This is ATP-dependent rRNA helicase rrp3 from Aspergillus oryzae (strain ATCC 42149 / RIB 40) (Yellow koji mold).